We begin with the raw amino-acid sequence, 535 residues long: Inositol 1,4,5-trisphosphate receptor-interacting protein-like 2 (535 aa).

A signal peptide spans 1 to 32 (MSVRYTLNLRVFWPLVTGLCTALVCLYHALRS). Residues 33–43 (SEDARAESPDG) lie on the Extracellular side of the membrane. Residues 44–64 (ADSGFPLLKVAILLLLGYILL) traverse the membrane as a helical segment. Residues 65–535 (RCRHAIRQRL…RIQGSPEDEP (471 aa)) are Cytoplasmic-facing. S139 carries the post-translational modification Phosphoserine.

It belongs to the ITPRIP family.

It localises to the membrane. This is Inositol 1,4,5-trisphosphate receptor-interacting protein-like 2 (Itpripl2) from Mus musculus (Mouse).